Reading from the N-terminus, the 1153-residue chain is Nitric oxide synthase, inducible (1153 aa).

Positions 23–27 (DINNN) match the DINNN-motif; mediates interaction with SPSB1, SPSB2 and SPSB4 motif. 2 residues coordinate Zn(2+): cysteine 110 and cysteine 115. Residue serine 118 coordinates (6R)-L-erythro-5,6,7,8-tetrahydrobiopterin. Cysteine 200 provides a ligand contact to heme b. The residue at position 234 (serine 234) is a Phosphoserine; by PKA. L-arginine contacts are provided by glutamine 263, tryptophan 372, tyrosine 373, and glutamate 377. Residues arginine 381, isoleucine 462, tryptophan 463, and phenylalanine 476 each coordinate (6R)-L-erythro-5,6,7,8-tetrahydrobiopterin. Tyrosine 491 contributes to the heme b binding site. Positions 515–535 (LKVLVKAVLFACMLMRKTMAS) are calmodulin-binding. Residues 539–677 (VTILFATETG…AFRSWAVQTF (139 aa)) form the Flavodoxin-like domain. FMN is bound by residues threonine 545, glutamate 546, threonine 547, lysine 549, and serine 550. Residue tyrosine 575 is modified to Phosphotyrosine. Position 578 is a phosphoserine; by PKA (serine 578). Serine 591, threonine 592, serine 628, arginine 633, cysteine 635, glutamate 661, and glutamine 665 together coordinate FMN. The FAD-binding FR-type domain occupies 730–970 (KNVFTMRLKS…VRNASGFHLP (241 aa)). Arginine 750 contributes to the NADP(+) binding site. Histidine 772 lines the FAD pocket. Residue serine 892 is modified to Phosphoserine; by PKA. Residues arginine 906, tyrosine 908, serine 909, threonine 924, and alanine 926 each contribute to the FAD site. Residue threonine 929 coordinates NADP(+). FAD-binding residues include tyrosine 930, valine 943, cysteine 944, and serine 945. Residues threonine 984, arginine 1017, serine 1046, arginine 1047, lysine 1053, tyrosine 1055, glutamine 1057, and aspartate 1090 each contribute to the NADP(+) site.

Belongs to the NOS family. Homodimer. Interacts with NHERF1. Interacts with GAPDH; induced by oxidatively-modified low-densitity lipoprotein (LDL(ox)). Interacts with S100A8 and S100A9 to form the iNOS-S100A8/9 transnitrosylase complex. Interacts with SPSB1, SPSB2 and SPSB4. Interacts with ELOC and CUL5 in the presence of SPSB1 or SPSB2 or SPSB4. Forms a complex with ASL, ASS1 and HSP90AA1; the complex regulates cell-autonomous L-arginine synthesis and citrulline recycling while channeling extracellular L-arginine to nitric oxide synthesis pathway. Heme b serves as cofactor. It depends on FAD as a cofactor. The cofactor is FMN. Requires (6R)-L-erythro-5,6,7,8-tetrahydrobiopterin as cofactor. Post-translationally, polyubiquitinated; mediated by SPSB1, SPSB2 and SPSB4, leading to proteasomal degradation. In terms of tissue distribution, expressed in the liver, retina, bone cells and airway epithelial cells of the lung. Not expressed in the platelets. Expressed in chondrocytes.

Its subcellular location is the cytoplasm. The protein resides in the cytosol. The enzyme catalyses 2 L-arginine + 3 NADPH + 4 O2 + H(+) = 2 L-citrulline + 2 nitric oxide + 3 NADP(+) + 4 H2O. Its activity is regulated as follows. Regulated by calcium/calmodulin. Aspirin inhibits expression and function of this enzyme and effects may be exerted at the level of translational/post-translational modification and directly on the catalytic activity. Produces nitric oxide (NO) which is a messenger molecule with diverse functions throughout the body. In macrophages, NO mediates tumoricidal and bactericidal actions. Also has nitrosylase activity and mediates cysteine S-nitrosylation of cytoplasmic target proteins such PTGS2/COX2. As component of the iNOS-S100A8/9 transnitrosylase complex involved in the selective inflammatory stimulus-dependent S-nitrosylation of GAPDH on 'Cys-247' implicated in regulation of the GAIT complex activity and probably multiple targets including ANXA5, EZR, MSN and VIM. Involved in inflammation, enhances the synthesis of pro-inflammatory mediators such as IL6 and IL8. This Homo sapiens (Human) protein is Nitric oxide synthase, inducible.